A 526-amino-acid polypeptide reads, in one-letter code: ATP synthase subunit alpha (526 aa).

Residue 171–178 (GDRQTGKT) participates in ATP binding.

The protein belongs to the ATPase alpha/beta chains family. As to quaternary structure, F-type ATPases have 2 components, CF(1) - the catalytic core - and CF(0) - the membrane proton channel. CF(1) has five subunits: alpha(3), beta(3), gamma(1), delta(1), epsilon(1). CF(0) has four main subunits: a, b, b' and c.

It is found in the cell inner membrane. The catalysed reaction is ATP + H2O + 4 H(+)(in) = ADP + phosphate + 5 H(+)(out). Its function is as follows. Produces ATP from ADP in the presence of a proton gradient across the membrane. The alpha chain is a regulatory subunit. The polypeptide is ATP synthase subunit alpha (Pelodictyon phaeoclathratiforme (strain DSM 5477 / BU-1)).